Here is a 149-residue protein sequence, read N- to C-terminus: Oocyte-expressed protein homolog (149 aa).

Positions 1-23 (MVDDAGTAESQRGKQTPADSLEQ) are disordered. The segment covering 8–18 (AESQRGKQTPA) has biased composition (polar residues). The 62-residue stretch at 49 to 110 (PLVFYLEAWL…SVQNRVKSML (62 aa)) folds into the KH; atypical domain.

The protein belongs to the KHDC1 family. In terms of assembly, component of the subcortical maternal complex (SCMC), at least composed of NLRP5, KHDC3, OOEP, and TLE6. Within the complex, interacts with NLRP5, KHDC3 and TLE6. As part of the SCMC interacts with the SCMC-associated protein NLRP4F. The SCMC may facilitate translocation of its components between the nuclear and cytoplasmic compartments. Forms a scaffold complex with KHDC3/FILIA, and interacts with BLM and TRIM25 at DNA replication forks.

Its subcellular location is the cytoplasm. It localises to the nucleus. In terms of biological role, component of the subcortical maternal complex (SCMC), a multiprotein complex that plays a key role in early embryonic development. The SCMC complex is a structural constituent of cytoplasmic lattices, which consist in fibrous structures found in the cytoplasm of oocytes and preimplantation embryos. They are required to store maternal proteins critical for embryonic development, such as proteins that control epigenetic reprogramming of the preimplantation embryo, and prevent their degradation or activation. As part of the OOEP-KHDC3 scaffold, recruits BLM and TRIM25 to DNA replication forks, thereby promoting the ubiquitination of BLM by TRIM25, enhancing BLM retainment at replication forks and therefore promoting stalled replication fork restart. Positively regulates the homologous recombination-mediated DNA double-strand break (DSB) repair pathway by regulating ATM activation and RAD51 recruitment to DSBs in oocytes. Thereby contributes to oocyte survival and the resumption and completion of meiosis. This Papio anubis (Olive baboon) protein is Oocyte-expressed protein homolog (OOEP).